A 776-amino-acid polypeptide reads, in one-letter code: Endonuclease MutS2 (776 aa).

Position 330-337 (330-337 (GPNTGGKT)) interacts with ATP. One can recognise a Smr domain in the interval 701–776 (LDLRGMRYEE…GSGATIAILK (76 aa)).

The protein belongs to the DNA mismatch repair MutS family. MutS2 subfamily. As to quaternary structure, homodimer. Binds to stalled ribosomes, contacting rRNA.

In terms of biological role, endonuclease that is involved in the suppression of homologous recombination and thus may have a key role in the control of bacterial genetic diversity. Functionally, acts as a ribosome collision sensor, splitting the ribosome into its 2 subunits. Detects stalled/collided 70S ribosomes which it binds and splits by an ATP-hydrolysis driven conformational change. Acts upstream of the ribosome quality control system (RQC), a ribosome-associated complex that mediates the extraction of incompletely synthesized nascent chains from stalled ribosomes and their subsequent degradation. Probably generates substrates for RQC. In Lactococcus lactis subsp. cremoris (strain SK11), this protein is Endonuclease MutS2.